Consider the following 973-residue polypeptide: GATOR2 complex protein WDR59 (973 aa).

WD repeat units lie at residues 57-98, 103-143, 146-185, 189-229, 232-276, and 280-324; these read QSKW…GEVC, GHTR…KPTV, SAVA…TAVE, AHLS…KYLN, PCQV…TPVH, and GHDD…QRLC. The tract at residues 346–365 is disordered; that stretch reads DKALQPQDSEPQHSSGHGDE. Residues 351 to 360 show a composition bias toward polar residues; it reads PQDSEPQHSS. The region spanning 393-494 is the RWD domain; sequence QEFSLINVQI…RQLVSWLESV (102 aa). The C4-type zinc finger occupies 900–920; sequence YCSHCRSEARGTQCAICKGFT. Zn(2+) contacts are provided by cysteine 901, cysteine 904, cysteine 913, cysteine 916, cysteine 926, cysteine 937, histidine 942, histidine 945, histidine 948, cysteine 959, cysteine 963, cysteine 965, and cysteine 967. Residues 921–970 form an RING-type; atypical zinc finger; that stretch reads FQCAICHVAVRGSSNFCLTCGHGGHTSHMMEWFRTQEVCPTGCGCHCLLE.

This sequence belongs to the WD repeat WDR59 family. Component of the GATOR2 subcomplex, composed of MIOS, SEC13, SEH1L, WDR24 and WDR59. The GATOR2 complex interacts with CASTOR1 and CASTOR2; the interaction is negatively regulated by arginine. The GATOR2 complex interacts with SESN1, SESN2 and SESN3; the interaction is negatively regulated by amino acids. Interacts with DDB1-CUL4A/B E3 ligase complexes.

It localises to the lysosome membrane. Its activity is regulated as follows. The GATOR2 complex is negatively regulated by the upstream amino acid sensors CASTOR1 and SESN2, which sequester the GATOR2 complex in absence of amino acids. In the presence of abundant amino acids, GATOR2 is released from CASTOR1 and SESN2 and activated. As a component of the GATOR2 complex, functions as an activator of the amino acid-sensing branch of the mTORC1 signaling pathway. The GATOR2 complex indirectly activates mTORC1 through the inhibition of the GATOR1 subcomplex. GATOR2 probably acts as an E3 ubiquitin-protein ligase toward GATOR1. In the presence of abundant amino acids, the GATOR2 complex mediates ubiquitination of the NPRL2 core component of the GATOR1 complex, leading to GATOR1 inactivation. In the absence of amino acids, GATOR2 is inhibited, activating the GATOR1 complex. In Gallus gallus (Chicken), this protein is GATOR2 complex protein WDR59.